A 453-amino-acid polypeptide reads, in one-letter code: GTPase Der (453 aa).

EngA-type G domains lie at 3–167 (FTLA…PAQT) and 187–360 (IKVA…AVWN). GTP is bound by residues 9-16 (GRPNVGKS), 56-60 (DTAGL), 119-122 (NKSE), 193-200 (GRPNAGKS), 240-244 (DTAGL), and 305-308 (NKSD). The KH-like domain maps to 361-445 (TRIPTNPLNR…PIRLTLREKG (85 aa)).

Belongs to the TRAFAC class TrmE-Era-EngA-EngB-Septin-like GTPase superfamily. EngA (Der) GTPase family. In terms of assembly, associates with the 50S ribosomal subunit.

In terms of biological role, GTPase that plays an essential role in the late steps of ribosome biogenesis. The protein is GTPase Der of Azorhizobium caulinodans (strain ATCC 43989 / DSM 5975 / JCM 20966 / LMG 6465 / NBRC 14845 / NCIMB 13405 / ORS 571).